Consider the following 519-residue polypeptide: Steroid 17-alpha-hydroxylase/17,20 lyase (519 aa).

Cysteine 455 lines the heme pocket.

Belongs to the cytochrome P450 family. Requires heme as cofactor.

The protein resides in the membrane. It catalyses the reaction a C21-steroid + reduced [NADPH--hemoprotein reductase] + O2 = a 17alpha-hydroxy-C21-steroid + oxidized [NADPH--hemoprotein reductase] + H2O + H(+). The enzyme catalyses 17alpha-hydroxyprogesterone + reduced [NADPH--hemoprotein reductase] + O2 = androst-4-ene-3,17-dione + acetate + oxidized [NADPH--hemoprotein reductase] + H2O + 2 H(+). The catalysed reaction is 17alpha-hydroxypregnenolone + reduced [NADPH--hemoprotein reductase] + O2 = 3beta-hydroxyandrost-5-en-17-one + acetate + oxidized [NADPH--hemoprotein reductase] + H2O + 2 H(+). The protein operates within lipid metabolism; steroid biosynthesis. In terms of biological role, conversion of pregnenolone and progesterone to their 17-alpha-hydroxylated products and subsequently to dehydroepiandrosterone (DHEA) and androstenedione. Catalyzes both the 17-alpha-hydroxylation and the 17,20-lyase reaction. The polypeptide is Steroid 17-alpha-hydroxylase/17,20 lyase (CYP17A1) (Rana dybowskii (Dybovsky's frog)).